The following is a 233-amino-acid chain: Probable septum site-determining protein MinC (233 aa).

The interval 98 to 123 (LTEGKEKAPRPAPSEPTPPPPPVANQ) is disordered. Pro residues predominate over residues 107–120 (RPAPSEPTPPPPPV).

This sequence belongs to the MinC family. In terms of assembly, interacts with MinD and FtsZ.

Its function is as follows. Cell division inhibitor that blocks the formation of polar Z ring septums. Rapidly oscillates between the poles of the cell to destabilize FtsZ filaments that have formed before they mature into polar Z rings. Prevents FtsZ polymerization. The chain is Probable septum site-determining protein MinC from Klebsiella pneumoniae (strain 342).